The primary structure comprises 321 residues: tRNA pseudouridine synthase B (321 aa).

Catalysis depends on Asp47, which acts as the Nucleophile.

It belongs to the pseudouridine synthase TruB family. Type 1 subfamily.

It carries out the reaction uridine(55) in tRNA = pseudouridine(55) in tRNA. Functionally, responsible for synthesis of pseudouridine from uracil-55 in the psi GC loop of transfer RNAs. The sequence is that of tRNA pseudouridine synthase B from Shewanella baltica (strain OS185).